We begin with the raw amino-acid sequence, 365 residues long: WAT1-related protein At4g01440 (365 aa).

The next 10 helical transmembrane spans lie at 8-28 (WTPV…NALV), 40-60 (VIAT…AFFW), 72-92 (ILVQ…YFFL), 101-121 (TLAC…ALIF), 132-152 (AGMG…LLTM), 181-201 (WIIG…WMLI), 213-233 (YSST…LSLI), 249-269 (IVTI…GTSW), 277-297 (IFTS…DFLI), and 302-322 (IFLG…IFLL). 2 EamA domains span residues 25 to 144 (NALV…LICI) and 196 to 321 (GSWM…YIFL).

This sequence belongs to the drug/metabolite transporter (DMT) superfamily. Plant drug/metabolite exporter (P-DME) (TC 2.A.7.4) family.

Its subcellular location is the membrane. The sequence is that of WAT1-related protein At4g01440 from Arabidopsis thaliana (Mouse-ear cress).